The following is a 259-amino-acid chain: uncharacterized protein (259 aa).

The protein belongs to the BtpA family.

This is an uncharacterized protein from Pyrococcus abyssi (strain GE5 / Orsay).